The following is a 410-amino-acid chain: Putative ankyrin repeat protein FPV240 (410 aa).

6 ANK repeats span residues 33–62, 66–95, 100–129, 133–162, 166–195, and 200–229; these read NGYS…YPDY, DIES…FIND, KGNT…DTDV, DRFT…CTNI, YGCT…NIDY, and PCVT…DSNI.

The protein is Putative ankyrin repeat protein FPV240 of Vertebrata (FPV).